Consider the following 132-residue polypeptide: Phosphoribosyl-AMP cyclohydrolase (132 aa).

Residue Asp79 participates in Mg(2+) binding. A Zn(2+)-binding site is contributed by Cys80. Positions 81 and 83 each coordinate Mg(2+). Zn(2+)-binding residues include Cys100 and Cys107.

The protein belongs to the PRA-CH family. Homodimer. Mg(2+) is required as a cofactor. Requires Zn(2+) as cofactor.

The protein localises to the cytoplasm. It carries out the reaction 1-(5-phospho-beta-D-ribosyl)-5'-AMP + H2O = 1-(5-phospho-beta-D-ribosyl)-5-[(5-phospho-beta-D-ribosylamino)methylideneamino]imidazole-4-carboxamide. Its pathway is amino-acid biosynthesis; L-histidine biosynthesis; L-histidine from 5-phospho-alpha-D-ribose 1-diphosphate: step 3/9. Catalyzes the hydrolysis of the adenine ring of phosphoribosyl-AMP. This Acidovorax ebreus (strain TPSY) (Diaphorobacter sp. (strain TPSY)) protein is Phosphoribosyl-AMP cyclohydrolase.